Reading from the N-terminus, the 183-residue chain is Outer membrane protein H.8 (183 aa).

The N-terminal stretch at M1–A17 is a signal peptide. C18 carries the N-palmitoyl cysteine lipid modification. C18 carries S-diacylglycerol cysteine lipidation. The disordered stretch occupies residues A27 to A51. The Plastocyanin-like domain maps to G57–D183. H102, C166, H171, and M175 together coordinate Cu cation.

Requires Cu cation as cofactor.

The protein resides in the cell outer membrane. The sequence is that of Outer membrane protein H.8 from Neisseria meningitidis serogroup C / serotype 2a (strain ATCC 700532 / DSM 15464 / FAM18).